Consider the following 374-residue polypeptide: MILNKVAKCYGKQIGFFGNKTTQFIKPNQTIFLIGGTKRLFTTQQQQSPKKEEPKSEQQKKVEDKTEEKEKEKDEEENENEKEKENEDGEGQKKKSKFNVPPIVTSVTSTFFAGVLVASTFGYLTYNFKKDISEEERYRLNSVESKFYHSIAEPFREFFDNIFENLRTKYEFFDMLFGPGKIHKVLPPPLPGGKKYTLVIDIDALTEITKTSKYPTLYKRAGLDFFLDHLRKDYEIYLYFNGNIPQNKYEQLQFKIDTNGKYFTGLLYPETGIKERNQFSKKIEMLDRDPSKVIFIDAASPYDHPNVINIGKFKSNSKDKLLIELLPVLESFSRKNLDDVRPEISQFQNISKQSLTKNLEDYLSTHNINSRQKK.

The transit peptide at 1-48 directs the protein to the mitochondrion; sequence MILNKVAKCYGKQIGFFGNKTTQFIKPNQTIFLIGGTKRLFTTQQQQS. The disordered stretch occupies residues 42–97; it reads TTQQQQSPKKEEPKSEQQKKVEDKTEEKEKEKDEEENENEKEKENEDGEGQKKKSK. Composition is skewed to basic and acidic residues over residues 49-72 and 81-93; these read PKKE…KEKE and EKEK…EGQK. Residues 103–125 traverse the membrane as a helical segment; that stretch reads IVTSVTSTFFAGVLVASTFGYLT. Residues 191 to 332 enclose the FCP1 homology domain; sequence PGGKKYTLVI…IELLPVLESF (142 aa).

Belongs to the TIM50 family. Component of the mitochondrial import inner membrane translocase complex.

Its subcellular location is the mitochondrion inner membrane. Its function is as follows. Component of the mitochondrial import inner membrane translocase that mediates the translocation of transit peptide-containing proteins across the mitochondrial inner membrane. This chain is Mitochondrial import inner membrane translocase subunit tim50 (timm50), found in Dictyostelium discoideum (Social amoeba).